A 269-amino-acid chain; its full sequence is Cbp/p300-interacting transactivator 2 (269 aa).

Positions 142–200 are disordered; that stretch reads AGHQMNGTNQHFRDCNPKHSGGSSTPGGAGGSGTPGGSGGTSGGAGGSSAGGSGGGSTM. Residues 165 to 198 are compositionally biased toward gly residues; the sequence is STPGGAGGSGTPGGSGGTSGGAGGSSAGGSGGGS.

It belongs to the CITED family. In terms of assembly, interacts (via C-terminus) with EP300 (via CH1 domain); the interaction is stimulated in response to hypoxia. Interacts with PPARA. Interacts (via C-terminus) with TFAP2A, TFAP2B and TFAP2C. Interacts (via C-terminus) with SMAD2. Interacts (via C-terminus) with SMAD3 (via MH2 domain). Interacts with LHX2 (via LIM domains). Interacts with WT1 isoform 1 and isoform 3. Ubiquitous.

It is found in the nucleus. Functionally, transcriptional coactivator of the p300/CBP-mediated transcription complex. Acts as a bridge, linking TFAP2 transcription factors and the p300/CBP transcriptional coactivator complex in order to stimulate TFAP2-mediated transcriptional activation. Positively regulates TGF-beta signaling through its association with the SMAD/p300/CBP-mediated transcriptional coactivator complex. Stimulates the peroxisome proliferator-activated receptors PPARA transcriptional activity. Enhances estrogen-dependent transactivation mediated by estrogen receptors. Also acts as a transcriptional corepressor; interferes with the binding of the transcription factors HIF1A or STAT2 and the p300/CBP transcriptional coactivator complex. Participates in sex determination and early gonad development by stimulating transcription activation of SRY. Plays a role in controlling left-right patterning during embryogenesis; potentiates transcriptional activation of NODAL-mediated gene transcription in the left lateral plate mesoderm (LPM). Plays an essential role in differentiation of the adrenal cortex from the adrenogonadal primordium (AGP); stimulates WT1-mediated transcription activation thereby up-regulating the nuclear hormone receptor NR5A1 promoter activity. Associates with chromatin to the PITX2 P1 promoter region. This is Cbp/p300-interacting transactivator 2 (Cited2) from Mus musculus (Mouse).